Reading from the N-terminus, the 99-residue chain is Small integral membrane protein 14 (99 aa).

Residues 1–49 (MAEGGFDPCECICSHEHAMRRLINLLRQSQSYCTDTECLRELPGPSGDS) lie on the Lumenal side of the membrane. Residues 50–70 (GISITVILMAWMVIAVLLFLL) traverse the membrane as a helical segment. The Cytoplasmic segment spans residues 71-99 (RPPNLRGSSLPGKPSSPHSGQDPPAPPVD). The disordered stretch occupies residues 77–99 (GSSLPGKPSSPHSGQDPPAPPVD).

Its subcellular location is the endoplasmic reticulum membrane. The sequence is that of Small integral membrane protein 14 (Smim14) from Rattus norvegicus (Rat).